The chain runs to 535 residues: MTKYIFVTGGVVSSLGKGITASSLGRLLKNRGLNVTIQKFDPYINVDPGTMSPYQHGEVFVTDDGAETDLDLGHYERFIDINLNKYSNVTTGKIYSTVLKKERRGDYLGGTVQVIPHITNEIKDRVFRAGKETHADVVITEIGGTVGDIESLPFLEAIRQIKSDVGRDNVMYIHCTLVPYLKAAGEMKTKPTQHSVKELRSLGIQPNVIVVRTEMPISQDMKDKIALFCDIDPKAVIEAGDADTLYSIPLDLQKQGLDSLVCSHLKLDCREADMEEWKELVKKVKNLSKTVTIALVGKYVELPDAYISVVESLRHAGYAFDADIQVKWINAEEVTEDNVADLVQNADGILVPGGFGDRGVEGKITTVKYAREQKIPFFGICLGMQVASIEYARNVLGLEGAHSAEIDPSTPYPIIDLLPEQKDIEDLGGTLRLGLYPCKLQEGSKAYQAYENEVVYERHRHRYEFNNEFRQQMEEAGFVFSGTSPDGRLVEIIELKDHPWFVASQFHPEFTSRPTRPQALFRDFVHASLKTSEKL.

Positions 1-267 (MTKYIFVTGG…DSLVCSHLKL (267 aa)) are amidoligase domain. Ser-13 contacts CTP. Ser-13 contributes to the UTP binding site. ATP is bound at residue 14–19 (SLGKGI). Position 54 (Tyr-54) interacts with L-glutamine. Residue Asp-71 coordinates ATP. Positions 71 and 141 each coordinate Mg(2+). CTP is bound by residues 148-150 (DIE), 188-193 (KTKPTQ), and Lys-224. UTP is bound by residues 188–193 (KTKPTQ) and Lys-224. The Glutamine amidotransferase type-1 domain occupies 292–534 (TIALVGKYVE…VHASLKTSEK (243 aa)). Residue Gly-354 participates in L-glutamine binding. Cys-381 functions as the Nucleophile; for glutamine hydrolysis in the catalytic mechanism. L-glutamine contacts are provided by residues 382-385 (LGMQ), Glu-405, and Arg-462. Active-site residues include His-507 and Glu-509.

Belongs to the CTP synthase family. Homotetramer.

It carries out the reaction UTP + L-glutamine + ATP + H2O = CTP + L-glutamate + ADP + phosphate + 2 H(+). The catalysed reaction is L-glutamine + H2O = L-glutamate + NH4(+). The enzyme catalyses UTP + NH4(+) + ATP = CTP + ADP + phosphate + 2 H(+). Its pathway is pyrimidine metabolism; CTP biosynthesis via de novo pathway; CTP from UDP: step 2/2. Allosterically activated by GTP, when glutamine is the substrate; GTP has no effect on the reaction when ammonia is the substrate. The allosteric effector GTP functions by stabilizing the protein conformation that binds the tetrahedral intermediate(s) formed during glutamine hydrolysis. Inhibited by the product CTP, via allosteric rather than competitive inhibition. Catalyzes the ATP-dependent amination of UTP to CTP with either L-glutamine or ammonia as the source of nitrogen. Regulates intracellular CTP levels through interactions with the four ribonucleotide triphosphates. This chain is CTP synthase, found in Bacillus licheniformis (strain ATCC 14580 / DSM 13 / JCM 2505 / CCUG 7422 / NBRC 12200 / NCIMB 9375 / NCTC 10341 / NRRL NRS-1264 / Gibson 46).